A 354-amino-acid polypeptide reads, in one-letter code: Tsukushi (354 aa).

The N-terminal stretch at 1–17 (MLCSLFLLLLAVGRVQT) is a signal peptide. The region spanning 18 to 59 (TRPCFPGCQCEEETFGLFDSFSLIRVDCSSLGPHIVPVPIPL) is the LRRNT domain. LRR repeat units follow at residues 60–81 (DTAH…VLAG), 86–107 (TLAG…AFSR), 110–131 (YLES…IFTS), 133–154 (PLSD…AFTT), 160–180 (ALHV…PARA), 186–207 (TIQS…RDLP), 208–228 (LRYL…AFMG), 231–253 (GLTH…GFRE), 256–277 (GLQV…EVFS), and 281–302 (LLQE…LLHH). N-linked (GlcNAc...) asparagine glycosylation is present at N75. Residue N138 is glycosylated (N-linked (GlcNAc...) asparagine). N-linked (GlcNAc...) asparagine glycosylation is present at N191.

Interacts with FZD4 (via FZ domain); competes with WNT2B for binding to FZD4, inhibiting Wnt signaling and repressing peripheral eye development. Interacts with TGFB1; the interaction contributes to regulation of the hair cycle. Interacts with netrin. Interacts with CCN2. As to expression, expressed in macrophages in inflamed wounds with wound expression starting 2 days post-wounding (dpw) (at protein level). At 7 dpw, expressed from epidermis and extracellular matrix in the wound edge to neoepidermis and granulation tissue and in panniculus carnosus under the granulation tissue (at protein level). After fibrosis, disappears in the dermal area at 11 dpw (at protein level). Expressed in the hair follicle during morphogenesis and the hair cycle (at protein level). In embryonic brain, strong expression in the olfactory bulb, anterior olfactory nucleus, neocortex, piriform cortex, glial wedge, midline zipper glia, indusium griseum and the area surrounding the anterior commissure (AC) but not on AC axons (at protein level). In the adult eye, expressed in retinal layers, lens epithelium, and ciliary body where it is expressed predominantly in the inner non-pigmented layer. Expressed in almost all brain regions in the embryo, in the cortex and the lateral ventricle at P0 and is restricted to the subventricular zone and lateral nucleus of the amygdala in adults. Prominent expression in hippocampal regions from early postnatal stages until postnatal day 15 and gradually declines at later stages. Expressed in almost all bone regions in the femurs of juveniles. In the inner ear, accumulates in nonprosensory regions during early embryonic stages and in both nonprosensory and prosensory regions in late embryonic stages. In the adult ear, expressed in the organ of Corti, spiral ganglion cells, and the stria vascularis. Highly expressed in the liver where it is detected primarily in hepatocytes but not in non-parenchymal cells.

Its subcellular location is the secreted. Functionally, contributes to various developmental events and other processes such as wound healing and cholesterol homeostasis through its interactions with multiple signaling pathways. Wnt signaling inhibitor which competes with WNT2B for binding to Wnt receptor FZD4 and represses WNT2B-dependent development of the peripheral eye. Plays a role in regulating the hair cycle by controlling TGFB1 signaling. Required for the development of the anterior commissure in the brain by inhibiting neurite outgrowth. Essential for terminal differentiation of hippocampal neural stem cells. Plays a role in regulating bone elongation and bone mass by modulating growth plate chondrocyte function and overall body size. Required for development of the inner ear through its involvement in stereocilia formation in inner hair cells. Facilitates wound healing by inhibiting secretion of TGFB1 from macrophages which prevents myofibroblast differentiation, maintaining inflammatory cell quiescence. Plays a role in cholesterol homeostasis by reducing circulating high-density lipoprotein cholesterol, lowering cholesterol efflux capacity and decreasing cholesterol-to-bile acid conversion in the liver. In one study, shown to negatively regulate sympathetic innervation in brown fat, leading to reduced energy expenditure. In another study, shown not to affect brown fat thermogenic capacity, body weight gain or glucose homeostasis. The polypeptide is Tsukushi (Mus musculus (Mouse)).